The chain runs to 92 residues: Toxin RelE3 (92 aa).

The protein belongs to the RelE toxin family.

Functionally, toxic component of a type II toxin-antitoxin (TA) system. Its toxic effect is neutralized by coexpression with cognate antitoxin RelB3 but no other ParD or RelB antitoxin. The protein is Toxin RelE3 (relE3) of Caulobacter vibrioides (strain ATCC 19089 / CIP 103742 / CB 15) (Caulobacter crescentus).